The following is a 221-amino-acid chain: DNA repair and recombination protein RadB (221 aa).

Belongs to the eukaryotic RecA-like protein family. RadB subfamily.

In terms of biological role, involved in DNA repair and in homologous recombination. May regulate the cleavage reactions of the branch-structured DNA. Has a very weak ATPase activity that is not stimulated by DNA. Binds DNA but does not promote DNA strands exchange. The protein is DNA repair and recombination protein RadB of Thermococcus gammatolerans (strain DSM 15229 / JCM 11827 / EJ3).